The following is a 208-amino-acid chain: Holliday junction branch migration complex subunit RuvA (208 aa).

A domain I region spans residues 1–63 (MIGMLTGRVE…QDAITLHGFL (63 aa)). The interval 64 to 142 (DRDAKKTFLQ…LSQIEGASAQ (79 aa)) is domain II. The flexible linker stretch occupies residues 143–151 (AATSKSPVD). The segment at 151–208 (DTGTEQVVEGLISLGWRQQDAQQAVAEACAENDIPTPLATDDVPRVLRLALALMDRGR) is domain III.

Belongs to the RuvA family. Homotetramer. Forms an RuvA(8)-RuvB(12)-Holliday junction (HJ) complex. HJ DNA is sandwiched between 2 RuvA tetramers; dsDNA enters through RuvA and exits via RuvB. An RuvB hexamer assembles on each DNA strand where it exits the tetramer. Each RuvB hexamer is contacted by two RuvA subunits (via domain III) on 2 adjacent RuvB subunits; this complex drives branch migration. In the full resolvosome a probable DNA-RuvA(4)-RuvB(12)-RuvC(2) complex forms which resolves the HJ.

Its subcellular location is the cytoplasm. The RuvA-RuvB-RuvC complex processes Holliday junction (HJ) DNA during genetic recombination and DNA repair, while the RuvA-RuvB complex plays an important role in the rescue of blocked DNA replication forks via replication fork reversal (RFR). RuvA specifically binds to HJ cruciform DNA, conferring on it an open structure. The RuvB hexamer acts as an ATP-dependent pump, pulling dsDNA into and through the RuvAB complex. HJ branch migration allows RuvC to scan DNA until it finds its consensus sequence, where it cleaves and resolves the cruciform DNA. The chain is Holliday junction branch migration complex subunit RuvA from Bifidobacterium longum (strain DJO10A).